Consider the following 645-residue polypeptide: Cilia- and flagella-associated protein 221 homolog (645 aa).

The disordered stretch occupies residues 381 to 408; it reads GGAVHQPSAPVGSSSSGGGGGSDPAFKP. The tract at residues 428–435 is interaction with calmodulin; it reads THQRLQRR.

It belongs to the PCDP1 family. As to quaternary structure, interacts with calmodulin; calcium-dependent. Part of the PDCP1 complex composed of CFAP46, CFAP54, CFAP74 and CFAP221; the PDCP1 complex binds calmodulin.

Its subcellular location is the cytoplasm. The protein resides in the cytoskeleton. The protein localises to the cilium axoneme. In terms of biological role, may play a role in cilium morphogenesis. The sequence is that of Cilia- and flagella-associated protein 221 homolog from Chlamydomonas reinhardtii (Chlamydomonas smithii).